Reading from the N-terminus, the 344-residue chain is Dihydroorotate dehydrogenase (quinone) (344 aa).

FMN is bound by residues 65-69 (AGLDK) and Thr89. Lys69 contributes to the substrate binding site. Residue 114–118 (NRMGF) coordinates substrate. Asn145 and Asn178 together coordinate FMN. Asn178 serves as a coordination point for substrate. Residue Ser181 is the Nucleophile of the active site. Asn183 is a substrate binding site. 2 residues coordinate FMN: Lys223 and Thr251. 252 to 253 (NT) lines the substrate pocket. FMN is bound by residues Gly274, Gly303, and 324-325 (YS).

It belongs to the dihydroorotate dehydrogenase family. Type 2 subfamily. Monomer. FMN is required as a cofactor.

It localises to the cell membrane. It carries out the reaction (S)-dihydroorotate + a quinone = orotate + a quinol. The protein operates within pyrimidine metabolism; UMP biosynthesis via de novo pathway; orotate from (S)-dihydroorotate (quinone route): step 1/1. Functionally, catalyzes the conversion of dihydroorotate to orotate with quinone as electron acceptor. This is Dihydroorotate dehydrogenase (quinone) from Cupriavidus taiwanensis (strain DSM 17343 / BCRC 17206 / CCUG 44338 / CIP 107171 / LMG 19424 / R1) (Ralstonia taiwanensis (strain LMG 19424)).